We begin with the raw amino-acid sequence, 457 residues long: MKNYPVKKNDVIEVEIIDLTHEGLGVAKVDHYPLFIENALPGEKLEIKVLKTGKSFGYGKVLTVLKSSEQRVPVKDENFTKVGISPLQHLAYGAQLSFKTQQVENVMQRVAKLQEVPVLPTIGMNDPWHYRNKAQIPVRKIDNQLQTGFFRKNSHDLIPMEHFYIQDPEIDAAIVKIRDIMRKYSVKPYNESDNTGNLRHIVVRRGYHTGEMMVVLITRTPKLFPISKIVPDILEAIPEVVSIVQNVNPKRTNVIFGDETILLHGSEKITDTIFDLKFEISARSFYQVNPQQTEVMYQKVKEYAALTGNEIVVDAYCGIGTIGLTLAQDAKQVYGIEVIEEAVKDAENNAKLNNIENATFTAGLAEELLPKLVENGLQPDVVVVDPPRKGLDGQLVNTLIETQPERIVYVSCNPATLARDIALLTEGGYEAKEIQPVDNFPQTTHIESVTLLTKAVD.

A TRAM domain is found at 5–63 (PVKKNDVIEVEIIDLTHEGLGVAKVDHYPLFIENALPGEKLEIKVLKTGKSFGYGKVLT). S-adenosyl-L-methionine contacts are provided by Q287, Y316, E337, and D385. C412 (nucleophile) is an active-site residue.

This sequence belongs to the class I-like SAM-binding methyltransferase superfamily. RNA M5U methyltransferase family.

This is an uncharacterized protein from Enterococcus faecalis (strain ATCC 700802 / V583).